The sequence spans 115 residues: MFDKIKNFSEILSNMGSFREKMEEVKKRIASIRVVGDAGAGMVTVTASGEGQITNVFINKQLFDADDNKMLEDLVMAATNDALKKAKEATAYEFQSASGGLDFSEISKMFGGKFG.

Belongs to the YbaB/EbfC family. Homodimer.

It localises to the cytoplasm. The protein resides in the nucleoid. Binds to DNA and alters its conformation. May be involved in regulation of gene expression, nucleoid organization and DNA protection. The protein is Nucleoid-associated protein LA_4332 of Leptospira interrogans serogroup Icterohaemorrhagiae serovar Lai (strain 56601).